The following is a 76-amino-acid chain: Acyl carrier protein (76 aa).

The Carrier domain occupies 1–76 (MSVEEKVKKI…DAIDYIAGKQ (76 aa)). An O-(pantetheine 4'-phosphoryl)serine modification is found at serine 36.

The protein belongs to the acyl carrier protein (ACP) family. In terms of processing, 4'-phosphopantetheine is transferred from CoA to a specific serine of apo-ACP by AcpS. This modification is essential for activity because fatty acids are bound in thioester linkage to the sulfhydryl of the prosthetic group.

Its subcellular location is the cytoplasm. It participates in lipid metabolism; fatty acid biosynthesis. Its function is as follows. Carrier of the growing fatty acid chain in fatty acid biosynthesis. This Oleidesulfovibrio alaskensis (strain ATCC BAA-1058 / DSM 17464 / G20) (Desulfovibrio alaskensis) protein is Acyl carrier protein.